Here is a 1128-residue protein sequence, read N- to C-terminus: Nck-associated protein 1 (1128 aa).

S2 is subject to N-acetylserine. The disordered stretch occupies residues 640–665 (AVNKKSKKQTGKKGEPEREKPGVESM). The span at 651 to 665 (KKGEPEREKPGVESM) shows a compositional bias: basic and acidic residues. The chain crosses the membrane as a helical span at residues 995-1015 (IACLLMVFVAVSLPTLASNVM).

It belongs to the HEM-1/HEM-2 family. In terms of assembly, component of the WAVE1 complex composed of ABI2, CYFIP1 or CYFIP2, BRK1, NCKAP1 and WASF1/WAVE1. Within the complex, a heterodimer containing NCKAP1 and CYFIP1 interacts with a heterotrimer formed by WAVE1, ABI2 and BRK1. Component of the WAVE2 complex composed of ABI1, CYFIP1/SRA1, NCKAP1/NAP1 and WASF2/WAVE2. CYFIP2 binds to activated RAC1 which causes the complex to dissociate, releasing activated WASF1. The complex can also be activated by NCK1. Associates preferentially with the first SH3 domain of NCK. Interacts with NYAP1, NYAP2 and MYO16. Interacts with TMEM132D. In terms of tissue distribution, preferentially expressed in brain, heart, liver and testis.

The protein resides in the cell membrane. It is found in the cell projection. Its subcellular location is the lamellipodium membrane. Part of the WAVE complex that regulates lamellipodia formation. The WAVE complex regulates actin filament reorganization via its interaction with the Arp2/3 complex. Actin remodeling activity is regulated by RAC1. As component of the WAVE1 complex, required for BDNF-NTRK2 endocytic trafficking and signaling from early endosomes. The sequence is that of Nck-associated protein 1 (Nckap1) from Rattus norvegicus (Rat).